Consider the following 291-residue polypeptide: 4-hydroxy-tetrahydrodipicolinate synthase (291 aa).

A pyruvate-binding site is contributed by threonine 47. Catalysis depends on tyrosine 136, which acts as the Proton donor/acceptor. The Schiff-base intermediate with substrate role is filled by lysine 164. A pyruvate-binding site is contributed by isoleucine 206.

This sequence belongs to the DapA family. Homotetramer; dimer of dimers.

The protein resides in the cytoplasm. The catalysed reaction is L-aspartate 4-semialdehyde + pyruvate = (2S,4S)-4-hydroxy-2,3,4,5-tetrahydrodipicolinate + H2O + H(+). It participates in amino-acid biosynthesis; L-lysine biosynthesis via DAP pathway; (S)-tetrahydrodipicolinate from L-aspartate: step 3/4. Catalyzes the condensation of (S)-aspartate-beta-semialdehyde [(S)-ASA] and pyruvate to 4-hydroxy-tetrahydrodipicolinate (HTPA). In Leuconostoc citreum (strain KM20), this protein is 4-hydroxy-tetrahydrodipicolinate synthase.